The chain runs to 96 residues: Large ribosomal subunit protein uL23 (96 aa).

Belongs to the universal ribosomal protein uL23 family. Part of the 50S ribosomal subunit. Contacts protein L29, and trigger factor when it is bound to the ribosome.

Its function is as follows. One of the early assembly proteins it binds 23S rRNA. One of the proteins that surrounds the polypeptide exit tunnel on the outside of the ribosome. Forms the main docking site for trigger factor binding to the ribosome. This chain is Large ribosomal subunit protein uL23, found in Finegoldia magna (strain ATCC 29328 / DSM 20472 / WAL 2508) (Peptostreptococcus magnus).